A 297-amino-acid polypeptide reads, in one-letter code: Octopine catabolism/uptake operon regulatory protein OccR (297 aa).

One can recognise an HTH lysR-type domain in the interval 1–58 (MNLRQVEAFRAVMLTGQMTAAAELMLVTQPAISRLIKDFERATKLQLFERRGNHIIPT). Residues 18-37 (MTAAAELMLVTQPAISRLIK) constitute a DNA-binding region (H-T-H motif).

Belongs to the LysR transcriptional regulatory family.

In terms of biological role, positive regulatory protein for the occ operon involved in octopine catabolism and uptake. Also acts as a negative regulator of its expression. This is Octopine catabolism/uptake operon regulatory protein OccR (occR) from Rhizobium meliloti (Ensifer meliloti).